Consider the following 271-residue polypeptide: NADH-quinone oxidoreductase subunit B (271 aa).

[4Fe-4S] cluster is bound by residues cysteine 37, cysteine 38, cysteine 103, and cysteine 132. Residues 227 to 271 form a disordered region; the sequence is LAPPSVFGRAKRIPVDPKPSDEARAHGPGPTTESIGDVDGPDRGI. Basic and acidic residues predominate over residues 239–251; that stretch reads IPVDPKPSDEARA.

This sequence belongs to the complex I 20 kDa subunit family. In terms of assembly, NDH-1 is composed of 14 different subunits. Subunits NuoB, C, D, E, F, and G constitute the peripheral sector of the complex. It depends on [4Fe-4S] cluster as a cofactor.

It is found in the cell membrane. It catalyses the reaction a quinone + NADH + 5 H(+)(in) = a quinol + NAD(+) + 4 H(+)(out). NDH-1 shuttles electrons from NADH, via FMN and iron-sulfur (Fe-S) centers, to quinones in the respiratory chain. The immediate electron acceptor for the enzyme in this species is believed to be a menaquinone. Couples the redox reaction to proton translocation (for every two electrons transferred, four hydrogen ions are translocated across the cytoplasmic membrane), and thus conserves the redox energy in a proton gradient. This Frankia casuarinae (strain DSM 45818 / CECT 9043 / HFP020203 / CcI3) protein is NADH-quinone oxidoreductase subunit B.